The primary structure comprises 1374 residues: L-2-aminoadipate reductase large subunit (1374 aa).

The region spanning 828-905 is the Carrier domain; it reads SEFNQQEREI…AFAAEVSRLK (78 aa). At Ser-865 the chain carries O-(pantetheine 4'-phosphoryl)serine.

It belongs to the ATP-dependent AMP-binding enzyme family. As to quaternary structure, heterodimer of an alpha and a beta subunit. Pantetheine 4'-phosphate is required as a cofactor.

The enzyme catalyses (S)-2-amino-6-oxohexanoate + NADP(+) + H2O = L-2-aminoadipate + NADPH + 2 H(+). The catalysed reaction is (S)-2-amino-6-oxohexanoate + NAD(+) + H2O = L-2-aminoadipate + NADH + 2 H(+). It catalyses the reaction (S)-2-amino-6-oxohexanoate + AMP + diphosphate + NADP(+) = L-2-aminoadipate + ATP + NADPH + H(+). It functions in the pathway amino-acid biosynthesis; L-lysine biosynthesis via AAA pathway; L-lysine from L-alpha-aminoadipate (fungal route): step 1/3. In terms of biological role, catalyzes the activation of alpha-aminoadipate by ATP-dependent adenylation and the reduction of activated alpha-aminoadipate by NADPH. The activated alpha-aminoadipate is bound to the phosphopantheinyl group of the enzyme itself before it is reduced to (S)-2-amino-6-oxohexanoate. In Candida glabrata (strain ATCC 2001 / BCRC 20586 / JCM 3761 / NBRC 0622 / NRRL Y-65 / CBS 138) (Yeast), this protein is L-2-aminoadipate reductase large subunit (LYS2).